The primary structure comprises 323 residues: Beta-ketoacyl-[acyl-carrier-protein] synthase III (323 aa).

Active-site residues include C113 and H250. An ACP-binding region spans residues 251–255 (QANKR). The active site involves N280.

The protein belongs to the thiolase-like superfamily. FabH family. In terms of assembly, homodimer.

Its subcellular location is the cytoplasm. It carries out the reaction malonyl-[ACP] + acetyl-CoA + H(+) = 3-oxobutanoyl-[ACP] + CO2 + CoA. It functions in the pathway lipid metabolism; fatty acid biosynthesis. Catalyzes the condensation reaction of fatty acid synthesis by the addition to an acyl acceptor of two carbons from malonyl-ACP. Catalyzes the first condensation reaction which initiates fatty acid synthesis and may therefore play a role in governing the total rate of fatty acid production. Possesses both acetoacetyl-ACP synthase and acetyl transacylase activities. Its substrate specificity determines the biosynthesis of branched-chain and/or straight-chain of fatty acids. The chain is Beta-ketoacyl-[acyl-carrier-protein] synthase III from Brucella suis (strain ATCC 23445 / NCTC 10510).